The chain runs to 446 residues: Histidine--tRNA ligase (446 aa).

It belongs to the class-II aminoacyl-tRNA synthetase family. In terms of assembly, homodimer.

The protein resides in the cytoplasm. The catalysed reaction is tRNA(His) + L-histidine + ATP = L-histidyl-tRNA(His) + AMP + diphosphate + H(+). This Burkholderia cenocepacia (strain ATCC BAA-245 / DSM 16553 / LMG 16656 / NCTC 13227 / J2315 / CF5610) (Burkholderia cepacia (strain J2315)) protein is Histidine--tRNA ligase.